The following is a 909-amino-acid chain: UPF0182 protein Moth_1139 (909 aa).

A run of 7 helical transmembrane segments spans residues 8–28 (FCLLIIIPGFLVAAYLGSHFL), 51–71 (VGIRLGTIAFFFLFFYLNLLF), 103–123 (LGILYLLLSLAGALIFSPLAA), 165–185 (LLITAVVGAVLVTGFFYFIFN), 201–221 (LVHFSTLVALLFLIQAWGFRL), 245–265 (LLPGYNILGWVAVACGLIIVL), and 277–297 (AGILSFMAAYFLLVIAVPLAV). The segment at 843-862 (PAPAASPQPPSQAATGSPGN) is disordered.

The protein belongs to the UPF0182 family.

It is found in the cell membrane. This is UPF0182 protein Moth_1139 from Moorella thermoacetica (strain ATCC 39073 / JCM 9320).